The primary structure comprises 85 residues: Cell division protein ZapA (85 aa).

Residues 60–85 adopt a coiled-coil conformation; sequence AVNVVHDYLKLKEQYEKLEIQLKEKE.

The protein belongs to the ZapA family. Type 2 subfamily. As to quaternary structure, homodimer. Interacts with FtsZ.

It localises to the cytoplasm. Activator of cell division through the inhibition of FtsZ GTPase activity, therefore promoting FtsZ assembly into bundles of protofilaments necessary for the formation of the division Z ring. It is recruited early at mid-cell but it is not essential for cell division. This is Cell division protein ZapA from Bacillus pumilus (strain SAFR-032).